The sequence spans 471 residues: Plasmepsin VII (471 aa).

A signal peptide spans 1-24 (MKSVYHHFAIIFFLKLFLCNCILS). Positions 96–438 (YYGKIAIGEN…DKDNLQIGFV (343 aa)) constitute a Peptidase A1 domain. Active-site residues include D115 and D325.

The protein belongs to the peptidase A1 family.

The protein resides in the cytoplasm. This chain is Plasmepsin VII, found in Plasmodium berghei (strain Anka).